We begin with the raw amino-acid sequence, 396 residues long: B2 bradykinin receptor (396 aa).

Residues 1–65 (MDTRSSLCPK…EWWSWLNAIQ (65 aa)) lie on the Extracellular side of the membrane. 2 N-linked (GlcNAc...) asparagine glycosylation sites follow: N33 and N44. Residues 66-89 (APFLWVLFLLAALENIFVLSVFCL) form a helical membrane-spanning segment. At 90–98 (HKTNCTVAE) the chain is on the cytoplasmic side. A helical transmembrane segment spans residues 99–123 (IYLGNLAAADLILACGLPFWAITIA). The Extracellular segment spans residues 124 to 136 (NNFDWLFGEVLCR). A disulfide bridge links C135 with C216. The chain crosses the membrane as a helical span at residues 137 to 158 (VVNTMIYMNLYSSICFLMLVSI). The Cytoplasmic segment spans residues 159–180 (DRYLALVKTMSMGRMRGVRWAK). Y161 is subject to Phosphotyrosine. Residues 181 to 203 (LYSLVIWSCTLLLSSPMLVFRTM) traverse the membrane as a helical segment. Over 204–226 (KDYREEGHNVTACVIVYPSRSWE) the chain is Extracellular. N-linked (GlcNAc...) asparagine glycosylation is present at N212. The chain crosses the membrane as a helical span at residues 227–253 (VFTNMLLNLVGFLLPLSIITFCTVRIM). Residues 254-272 (QVLRNNEMKKFKEVQTEKK) are Cytoplasmic-facing. A helical membrane pass occupies residues 273 to 297 (ATVLVLAVLGLFVLCWFPFQISTFL). The Extracellular segment spans residues 298 to 316 (DTLLRLGVLSGCWNERAVD). The helical transmembrane segment at 317–340 (IVTQISSYVAYSNSCLNPLVYVIV) threads the bilayer. At 341-396 (GKRFRKKSREVYQAICRKGGCMGESVQMENSMGTLRTSISVDRQIHKLQDWAGNKQ) the chain is on the cytoplasmic side. Y352 bears the Phosphotyrosine mark. The S-palmitoyl cysteine moiety is linked to residue C356. A phosphoserine mark is found at S365 and S371. Position 374 is a phosphothreonine (T374). A phosphoserine; by GRK6 mark is found at S378 and S380.

The protein belongs to the G-protein coupled receptor 1 family. Bradykinin receptor subfamily. BDKRB2 sub-subfamily. As to quaternary structure, forms a complex with PECAM1 and GNAQ. Interacts with PECAM1. In terms of processing, diphosphorylation at Ser-365 and Ser-371, at Ser-378 and Ser-380, and at Thr-374 and Ser-380 seem to be correlated pairwise. Post-translationally, palmitoylation at Cys-356 and phosphorylation at Tyr-352 seem to be mutually exclusive. In terms of tissue distribution, uterus, vas deferens, kidney, ileum, heart, testis, lung and brain.

Its subcellular location is the cell membrane. Its function is as follows. Receptor for bradykinin. It is associated with G proteins that activate a phosphatidylinositol-calcium second messenger system. The protein is B2 bradykinin receptor (Bdkrb2) of Rattus norvegicus (Rat).